Consider the following 103-residue polypeptide: Sperm-associated antigen 11B (103 aa).

The first 25 residues, Met-1–Ala-25, serve as a signal peptide directing secretion. N-linked (GlcNAc...) asparagine glycosylation is present at Asn-29.

It belongs to the SPAG11 family. As to expression, specifically expressed in caput and proximal corpus of epididymis (at protein level). Present in the epididymal epithelium and on the sperm surface, with a subacrosomal equatorial distribution on the sperm head (at protein level).

Its subcellular location is the secreted. In terms of biological role, has antimicrobial activity against E.coli. Plays a role in the defense response in the male reproductive tract, contributing to sperm maturation, storage and protection. This chain is Sperm-associated antigen 11B, found in Homo sapiens (Human).